Here is a 133-residue protein sequence, read N- to C-terminus: UPF0225 protein BB3385 (133 aa).

Belongs to the UPF0225 family.

The sequence is that of UPF0225 protein BB3385 from Bordetella bronchiseptica (strain ATCC BAA-588 / NCTC 13252 / RB50) (Alcaligenes bronchisepticus).